The chain runs to 244 residues: 27 kDa core protein (244 aa).

Belongs to the chordopoxvirinae D3 family.

Its subcellular location is the virion. Functionally, late protein which is part of a large complex required for early virion morphogenesis. This complex participates in the formation of virosomes and the incorporation of virosomal contents into nascent immature virions. The polypeptide is 27 kDa core protein (Swinepox virus (strain Swine/Nebraska/17077-99/1999) (SWPV)).